The chain runs to 590 residues: UvrABC system protein C (590 aa).

The 78-residue stretch at 14-91 (DQPGCYLMKD…IKKYDPKYNV (78 aa)) folds into the GIY-YIG domain. The UVR domain occupies 196–231 (QQIKKELTEKMQEAAEQLEFERAKELRDQIAYIDST).

This sequence belongs to the UvrC family. As to quaternary structure, interacts with UvrB in an incision complex.

It localises to the cytoplasm. Functionally, the UvrABC repair system catalyzes the recognition and processing of DNA lesions. UvrC both incises the 5' and 3' sides of the lesion. The N-terminal half is responsible for the 3' incision and the C-terminal half is responsible for the 5' incision. This is UvrABC system protein C from Bacillus pumilus (strain SAFR-032).